The sequence spans 217 residues: 2-phospho-L-lactate guanylyltransferase (217 aa).

Belongs to the CofC family. In terms of assembly, homodimer.

It carries out the reaction (2S)-2-phospholactate + GTP + H(+) = (2S)-lactyl-2-diphospho-5'-guanosine + diphosphate. The protein operates within cofactor biosynthesis; coenzyme F420 biosynthesis. Guanylyltransferase that catalyzes the activation of (2S)-2-phospholactate (2-PL) as (2S)-lactyl-2-diphospho-5'-guanosine, via the condensation of 2-PL with GTP. It is involved in the biosynthesis of coenzyme F420, a hydride carrier cofactor. The sequence is that of 2-phospho-L-lactate guanylyltransferase from Methanospirillum hungatei JF-1 (strain ATCC 27890 / DSM 864 / NBRC 100397 / JF-1).